The following is a 1448-amino-acid chain: MGARASVLTGGKLDQWEKIYLRPGGKKKYMMKHLVWASRELERFACNPGLMDTAEGCAQLLRQLEPALKTGSEGLRSLFNTLAVLYCVHNNIKVQNTQEALEKLREKMKAEQKEPEPEQAAGAAAAPESSISRNYPLVQNAQGQMVHQPLSPRTLNAWVKVVEEKAFNPEVIPMFMALSEGATPQDLNTMLNTVGGHQAAMQMLKEVINEEAAEWDRGHPVHMGPIPPGQVREPRGSDIAGTTSTLAEQVAWMTANPPVPVGDIYRRWIVLGLNKIVRMYSPASILDIKQGPKETFRDYVDRFYKTLRAEQATQEVKNWMTETLLVQNANPDCKNILRALGPGASLEEMMTACQGVGGPAHKARVLAEAMTQAQTATSVFMQRGNFKGIRKTIKCFNCGKEGHLARNCKAPRKKGCWKCGQEGHQMKDCRSGERQFFREGLASLQREARKFPPDNNKERANSPSNRELWVSGGEDHTGDREGRKGEDRELSVPTLNFPQITLWQRPILTVKIGGEIKEALLDTGADDTVIEEIQLEGKWKPKMIGGIGGFIKVKQYDNVIIEIQGKKAVGTVLVGPTPVNIIGRNFLTQIGCTLNFPISPIETIPVKLKPGMDGPRVKQWPLTEEKIKALTEICTEMEKEGKISRIGPENPYNTPIFAIKKKDSTKWRKLVDFRELNKRTQDFWEVQLGIPHPAGLKKKKSVTVLDVGDAYFSCPLDENFRKYTAFTIPSVNNETPGIRYQYNVLPQGWKGSPAIFQSTMTKILEPFRKNNPELVIYQYMDDLYVGSDLEITQHREAVERLRSHLLTWGFTTPDKKHQKEPPFLWMGYELHPDKWTVQTIQLPEKDTWTVNDIQQLVGKLNWASQIYPGIKVKQLCKLIRGAKALTEVVTLTREAELELAENREILKEPVHGAYYNPDKELIAEIQKQGQGQWTYQIYQDLHKNLKTGKYAKMRSTHTNDIRQLTEVVQKVALESIVIWGKTPKFRLPVQKEVWETWWTEYWQATWIPDWEFVNTPPLVKLWYQLETEPISGAETYYVDGAANRETKLGKAGFVTDRGRQKVTSISETTNQQAELQAVLMALQDAGQEVNIVTDSQYVLGIIHSQPDKSESELVNQIIEELIKKERIYLSWVPAHKGIGGNEQIDKLVSTGIRKVLFLDGIDKAQEEHERYHSNWKAMASDFNLPPIVAKEIVASCDKCQLKGEAIHGQINCSPGVWQLDCTHLEGKIILVAVHVASGYLEAEVIPAETGQETAYFILKLAGRWPVKVIHTDNGSNFTSATVKAACWWANIQQEFGIPYNPQSQGAVESMNKELKKIIGQIRDQAEHLKTAVQMAVFIHNFKRKGGIGGYTAGERIIDIIATDIQTTKLQTQILKVQNFRVYYRDSREPTWKGPAKLLWKGEGAVVIQDNGDIKVVPRRKAKIIRDYGKQMAGDGCVASGQDESQDME.

A lipid anchor (N-myristoyl glycine; by host) is attached at Gly-2. Positions 16-22 (WEKIYLR) match the Nuclear export signal motif. The Nuclear localization signal motif lies at 26 to 32 (KKKYMMK). Positions 107 to 116 (KMKAEQKEPE) are enriched in basic and acidic residues. Residues 107–129 (KMKAEQKEPEPEQAAGAAAAPES) form a disordered region. Residues 118–128 (EQAAGAAAAPE) show a composition bias toward low complexity. Tyr-135 is subject to Phosphotyrosine; by host. 2 consecutive CCHC-type zinc fingers follow at residues 393 to 410 (IKCFNCGKEGHLARNCKA) and 414 to 431 (KGCWKCGQEGHQMKDCRS). Composition is skewed to basic and acidic residues over residues 446 to 460 (REARKFPPDNNKERA) and 473 to 490 (GEDHTGDREGRKGEDREL). Positions 446 to 490 (REARKFPPDNNKERANSPSNRELWVSGGEDHTGDREGRKGEDREL) are disordered. One can recognise a Peptidase A2 domain in the interval 517–586 (KEALLDTGAD…TPVNIIGRNF (70 aa)). The active-site For protease activity; shared with dimeric partner is Asp-522. A Reverse transcriptase domain is found at 640–830 (EGKISRIGPE…PPFLWMGYEL (191 aa)). Asp-706, Asp-781, and Asp-782 together coordinate Mg(2+). The segment at 823–831 (FLWMGYELH) is RT 'primer grip'. Positions 994 to 1010 (WETWWTEYWQATWIPDW) match the Tryptophan repeat motif motif. The region spanning 1030–1153 (ISGAETYYVD…IDKLVSTGIR (124 aa)) is the RNase H type-1 domain. Positions 1039, 1074, 1094, and 1145 each coordinate Mg(2+). The Integrase-type zinc-finger motif lies at 1159-1200 (DGIDKAQEEHERYHSNWKAMASDFNLPPIVAKEIVASCDKCQ). Zn(2+)-binding residues include His-1168, His-1172, Cys-1196, and Cys-1199. Residues 1210 to 1360 (INCSPGVWQL…TAGERIIDII (151 aa)) enclose the Integrase catalytic domain. 2 residues coordinate Mg(2+): Asp-1220 and Asp-1272. Positions 1379–1426 (FRVYYRDSREPTWKGPAKLLWKGEGAVVIQDNGDIKVVPRRKAKIIRD) form a DNA-binding region, integrase-type.

In terms of assembly, homotrimer. Interacts with gp41 (via C-terminus). As to quaternary structure, homodimer. The active site consists of two apposed aspartic acid residues. Heterodimer of p66 RT and p51 RT (RT p66/p51). Heterodimerization of RT is essential for DNA polymerase activity. Despite the sequence identities, p66 RT and p51 RT have distinct folding. In terms of assembly, homotetramer; may further associate as a homohexadecamer. Mg(2+) serves as cofactor. Specific enzymatic cleavages by the viral protease yield mature proteins. The protease is released by autocatalytic cleavage. The polyprotein is cleaved during and after budding, this process is termed maturation. Proteolytic cleavage of p66 RT removes the RNase H domain to yield the p51 RT subunit. Post-translationally, capsid protein p24 is phosphorylated.

It is found in the virion. The protein resides in the host nucleus. It localises to the host cytoplasm. Its subcellular location is the host cell membrane. It carries out the reaction Specific for a P1 residue that is hydrophobic, and P1' variable, but often Pro.. It catalyses the reaction Endohydrolysis of RNA in RNA/DNA hybrids. Three different cleavage modes: 1. sequence-specific internal cleavage of RNA. Human immunodeficiency virus type 1 and Moloney murine leukemia virus enzymes prefer to cleave the RNA strand one nucleotide away from the RNA-DNA junction. 2. RNA 5'-end directed cleavage 13-19 nucleotides from the RNA end. 3. DNA 3'-end directed cleavage 15-20 nucleotides away from the primer terminus.. The enzyme catalyses 3'-end directed exonucleolytic cleavage of viral RNA-DNA hybrid.. The catalysed reaction is DNA(n) + a 2'-deoxyribonucleoside 5'-triphosphate = DNA(n+1) + diphosphate. The viral protease is inhibited by many synthetic protease inhibitors (PIs), such as amprenavir, atazanavir, indinavir, loprinavir, nelfinavir, ritonavir and saquinavir. RT can be inhibited either by nucleoside RT inhibitors (NRTIs) or by non nucleoside RT inhibitors (NNRTIs). NRTIs act as chain terminators, whereas NNRTIs inhibit DNA polymerization by binding a small hydrophobic pocket near the RT active site and inducing an allosteric change in this region. Classical NRTIs are abacavir, adefovir (PMEA), didanosine (ddI), lamivudine (3TC), stavudine (d4T), tenofovir (PMPA), zalcitabine (ddC), and zidovudine (AZT). Classical NNRTIs are atevirdine (BHAP U-87201E), delavirdine, efavirenz (DMP-266), emivirine (I-EBU), and nevirapine (BI-RG-587). The tritherapies used as a basic effective treatment of AIDS associate two NRTIs and one NNRTI. Use of protease inhibitors in tritherapy regimens permit more ambitious therapeutic strategies. In terms of biological role, gag-Pol polyprotein and Gag polyprotein may regulate their own translation, by the binding genomic RNA in the 5'-UTR. At low concentration, Gag-Pol and Gag would promote translation, whereas at high concentration, the polyproteins encapsidate genomic RNA and then shut off translation. Its function is as follows. Matrix protein p17 has two main functions: in infected cell, it targets Gag and Gag-pol polyproteins to the plasma membrane via a multipartite membrane-binding signal, that includes its myristointegration complex. The myristoylation signal and the NLS exert conflicting influences its subcellular localization. The key regulation of these motifs might be phosphorylation of a portion of MA molecules on the C-terminal tyrosine at the time of virus maturation, by virion-associated cellular tyrosine kinase. Implicated in the release from host cell mediated by Vpu. Functionally, capsid protein p24 forms the conical core that encapsulates the genomic RNA-nucleocapsid complex in the virion. The core is constituted by capsid protein hexamer subunits. The core is disassembled soon after virion entry. Interaction with host PPIA/CYPA protects the virus from restriction by host TRIM5-alpha and from an unknown antiviral activity in host cells. This capsid restriction by TRIM5 is one of the factors which restricts SIV to the simian species. Nucleocapsid protein p7 encapsulates and protects viral dimeric unspliced (genomic) RNA. Binds these RNAs through its zinc fingers. Facilitates rearangement of nucleic acid secondary structure during retrotranscription of genomic RNA. This capability is referred to as nucleic acid chaperone activity. In terms of biological role, the aspartyl protease mediates proteolytic cleavages of Gag and Gag-Pol polyproteins during or shortly after the release of the virion from the plasma membrane. Cleavages take place as an ordered, step-wise cascade to yield mature proteins. This process is called maturation. Displays maximal activity during the budding process just prior to particle release from the cell. Also cleaves Nef and Vif, probably concomitantly with viral structural proteins on maturation of virus particles. Hydrolyzes host EIF4GI and PABP1 in order to shut off the capped cellular mRNA translation. The resulting inhibition of cellular protein synthesis serves to ensure maximal viral gene expression and to evade host immune response. Its function is as follows. Reverse transcriptase/ribonuclease H (RT) is a multifunctional enzyme that converts the viral dimeric RNA genome into dsDNA in the cytoplasm, shortly after virus entry into the cell. This enzyme displays a DNA polymerase activity that can copy either DNA or RNA templates, and a ribonuclease H (RNase H) activity that cleaves the RNA strand of RNA-DNA heteroduplexes in a partially processive 3' to 5' endonucleasic mode. Conversion of viral genomic RNA into dsDNA requires many steps. A tRNA binds to the primer-binding site (PBS) situated at the 5'-end of the viral RNA. RT uses the 3' end of the tRNA primer to perform a short round of RNA-dependent minus-strand DNA synthesis. The reading proceeds through the U5 region and ends after the repeated (R) region which is present at both ends of viral RNA. The portion of the RNA-DNA heteroduplex is digested by the RNase H, resulting in a ssDNA product attached to the tRNA primer. This ssDNA/tRNA hybridizes with the identical R region situated at the 3' end of viral RNA. This template exchange, known as minus-strand DNA strong stop transfer, can be either intra- or intermolecular. RT uses the 3' end of this newly synthesized short ssDNA to perform the RNA-dependent minus-strand DNA synthesis of the whole template. RNase H digests the RNA template except for two polypurine tracts (PPTs) situated at the 5'-end and near the center of the genome. It is not clear if both polymerase and RNase H activities are simultaneous. RNase H can probably proceed both in a polymerase-dependent (RNA cut into small fragments by the same RT performing DNA synthesis) and a polymerase-independent mode (cleavage of remaining RNA fragments by free RTs). Secondly, RT performs DNA-directed plus-strand DNA synthesis using the PPTs that have not been removed by RNase H as primers. PPTs and tRNA primers are then removed by RNase H. The 3' and 5' ssDNA PBS regions hybridize to form a circular dsDNA intermediate. Strand displacement synthesis by RT to the PBS and PPT ends produces a blunt ended, linear dsDNA copy of the viral genome that includes long terminal repeats (LTRs) at both ends. Functionally, integrase catalyzes viral DNA integration into the host chromosome, by performing a series of DNA cutting and joining reactions. This enzyme activity takes place after virion entry into a cell and reverse transcription of the RNA genome in dsDNA. The first step in the integration process is 3' processing. This step requires a complex comprising the viral genome, matrix protein, Vpr and integrase. This complex is called the pre-integration complex (PIC). The integrase protein removes 2 nucleotides from each 3' end of the viral DNA, leaving recessed CA OH's at the 3' ends. In the second step, the PIC enters cell nucleus. This process is mediated through integrase and Vpr proteins, and allows the virus to infect a non dividing cell. This ability to enter the nucleus is specific of lentiviruses, other retroviruses cannot and rely on cell division to access cell chromosomes. In the third step, termed strand transfer, the integrase protein joins the previously processed 3' ends to the 5' ends of strands of target cellular DNA at the site of integration. The 5'-ends are produced by integrase-catalyzed staggered cuts, 5 bp apart. A Y-shaped, gapped, recombination intermediate results, with the 5'-ends of the viral DNA strands and the 3' ends of target DNA strands remaining unjoined, flanking a gap of 5 bp. The last step is viral DNA integration into host chromosome. This involves host DNA repair synthesis in which the 5 bp gaps between the unjoined strands are filled in and then ligated. Since this process occurs at both cuts flanking the SIV genome, a 5 bp duplication of host DNA is produced at the ends of SIV integration. Alternatively, Integrase may catalyze the excision of viral DNA just after strand transfer, this is termed disintegration. The polypeptide is Gag-Pol polyprotein (gag-pol) (Pan troglodytes (Chimpanzee)).